The following is a 142-amino-acid chain: Midkine-A (142 aa).

The signal sequence occupies residues 1–20; sequence MELRAFCVILLITVLAVSSQ. 5 disulfide bridges follow: Cys-36-Cys-60, Cys-44-Cys-69, Cys-51-Cys-73, Cys-83-Cys-115, and Cys-93-Cys-125.

Belongs to the pleiotrophin family. As to expression, expression at the mid-gastrula stage begins in the neural anlage, and becomes increasingly prominent in the central nervous system and head mesenchyme during neurula stages. Although the mRNA is localized to the developing central nervous system (CNS), the protein is deposited at the neuromuscular junction (NMJ). In the tailbud stage embryo, expressed in the head and tail regions as well as in the CNS. In adults, expression is highest in the brain, eye and bone, with lower expression in the heart and lung. Not expressed in the ovary.

It localises to the secreted. Its function is as follows. Secreted protein that functions as a cytokine and growth factor and mediates its signal through cell-surface proteoglycan and non-proteoglycan receptors. Binds cell-surface proteoglycan receptors via their chondroitin sulfate (CS) groups. Thereby regulates many processes like inflammatory response, cell proliferation, cell adhesion, cell growth, cell survival, tissue regeneration, cell differentiation and cell migration. Inhibits mesoderm formation and promotes neural formation during development. Plays a role in development of the neuromuscular junction (NMJ). Has antibacterial activity against both Gram-positive and Gram-negative bacteria. This chain is Midkine-A (mdk-a), found in Xenopus laevis (African clawed frog).